A 421-amino-acid polypeptide reads, in one-letter code: Signal recognition particle receptor FtsY (421 aa).

The span at 1-10 (MFSFFRRKKK) shows a compositional bias: basic residues. The tract at residues 1-22 (MFSFFRRKKKQETPAPEEAQIQ) is disordered. GTP contacts are provided by residues 228-235 (GINGAGKT), 309-313 (DTAGR), and 373-376 (TKLD).

It belongs to the GTP-binding SRP family. FtsY subfamily. Part of the signal recognition particle protein translocation system, which is composed of SRP and FtsY. SRP is a ribonucleoprotein composed of Ffh and a 4.5S RNA molecule.

It is found in the cell membrane. The protein resides in the cytoplasm. It carries out the reaction GTP + H2O = GDP + phosphate + H(+). In terms of biological role, involved in targeting and insertion of nascent membrane proteins into the cytoplasmic membrane. Acts as a receptor for the complex formed by the signal recognition particle (SRP) and the ribosome-nascent chain (RNC). Interaction with SRP-RNC leads to the transfer of the RNC complex to the Sec translocase for insertion into the membrane, the hydrolysis of GTP by both Ffh and FtsY, and the dissociation of the SRP-FtsY complex into the individual components. The polypeptide is Signal recognition particle receptor FtsY (Neisseria meningitidis serogroup C).